Reading from the N-terminus, the 279-residue chain is 2-dehydro-3-deoxyphosphooctonate aldolase (279 aa).

The protein belongs to the KdsA family.

The protein localises to the cytoplasm. The catalysed reaction is D-arabinose 5-phosphate + phosphoenolpyruvate + H2O = 3-deoxy-alpha-D-manno-2-octulosonate-8-phosphate + phosphate. Its pathway is carbohydrate biosynthesis; 3-deoxy-D-manno-octulosonate biosynthesis; 3-deoxy-D-manno-octulosonate from D-ribulose 5-phosphate: step 2/3. It participates in bacterial outer membrane biogenesis; lipopolysaccharide biosynthesis. The protein is 2-dehydro-3-deoxyphosphooctonate aldolase of Methylobacillus flagellatus (strain ATCC 51484 / DSM 6875 / VKM B-1610 / KT).